A 333-amino-acid chain; its full sequence is CMP-N-acetylneuraminate-beta-galactosamide-alpha-2,3-sialyltransferase 4 (333 aa).

At 1–8 (MVSKSRWK) the chain is on the cytoplasmic side. Residues 9–26 (LLAMLALVLVVMVWYSIS) traverse the membrane as a helical; Signal-anchor for type II membrane protein segment. The Lumenal segment spans residues 27-333 (REDRYIELFY…MGAIKNLTSF (307 aa)). N-linked (GlcNAc...) asparagine glycans are attached at residues N61, N131, N310, and N329. An intrachain disulfide couples C120 to C273.

This sequence belongs to the glycosyltransferase 29 family. Post-translationally, the soluble form derives from the membrane form by proteolytic processing. As to expression, highly expressed in adult placenta, heart and kidney.

It is found in the golgi apparatus. The protein localises to the golgi stack membrane. The protein resides in the secreted. The enzyme catalyses a beta-D-galactosyl-(1-&gt;3)-N-acetyl-beta-D-galactosaminyl derivative + CMP-N-acetyl-beta-neuraminate = an N-acetyl-alpha-neuraminyl-(2-&gt;3)-beta-D-galactosyl-(1-&gt;3)-N-acetyl-beta-D-galactosaminyl derivative + CMP + H(+). It carries out the reaction a beta-D-galactosyl-(1-&gt;3)-N-acetyl-alpha-D-galactosaminyl derivative + CMP-N-acetyl-beta-neuraminate = an N-acetyl-alpha-neuraminyl-(2-&gt;3)-beta-D-galactosyl-(1-&gt;3)-N-acetyl-alpha-D-galactosaminyl derivative + CMP + H(+). The catalysed reaction is a beta-D-galactosyl-(1-&gt;4)-N-acetyl-beta-D-glucosaminyl derivative + CMP-N-acetyl-beta-neuraminate = an N-acetyl-alpha-neuraminyl-(2-&gt;3)-beta-D-galactosyl-(1-&gt;4)-N-acetyl-beta-D-glucosaminyl derivative + CMP + H(+). It catalyses the reaction a ganglioside GM1 (d18:1(4E)) + CMP-N-acetyl-beta-neuraminate = a ganglioside GD1a (d18:1(4E)) + CMP + H(+). The enzyme catalyses a ganglioside GA1 (d18:1(4E)) + CMP-N-acetyl-beta-neuraminate = a ganglioside GM1b (d18:1(4E)) + CMP + H(+). It carries out the reaction a ganglioside GT1c (d18:1(4E)) + CMP-N-acetyl-beta-neuraminate = a ganglioside GQ1c (d18:1(4E)) + CMP + H(+). The catalysed reaction is a neolactoside nLc4Cer + CMP-N-acetyl-beta-neuraminate = a neolactoside IV(3)-alpha-NeuAc-nLc4Cer + CMP + H(+). It catalyses the reaction a neolactoside nLc4Cer(d18:1(4E)) + CMP-N-acetyl-beta-neuraminate = a neolactoside IV(3)-alpha-NeuAc-nLc4Cer(d18:1(4E)) + CMP + H(+). The protein operates within protein modification; protein glycosylation. It participates in glycolipid biosynthesis. Its function is as follows. A beta-galactoside alpha2-3 sialyltransferase involved in terminal sialylation of glycoproteins and glycolipids. Catalyzes the transfer of sialic acid (N-acetyl-neuraminic acid; Neu5Ac) from the nucleotide sugar donor CMP-Neu5Ac onto acceptor Galbeta-(1-&gt;3)-GalNAc- and Galbeta-(1-&gt;4)-GlcNAc-terminated glycoconjugates through an alpha2-3 linkage. Plays a major role in hemostasis. Responsible for sialylation of plasma VWF/von Willebrand factor, preventing its recognition by asialoglycoprotein receptors (ASGPR) and subsequent clearance. Regulates ASGPR-mediated clearance of platelets. Participates in the biosynthesis of the sialyl Lewis X epitopes, both on O- and N-glycans, which are recognized by SELE/E-selectin, SELP/P-selectin and SELL/L-selectin. Essential for selectin-mediated rolling and adhesion of leukocytes during extravasation. Contributes to adhesion and transendothelial migration of neutrophils likely through terminal sialylation of CXCR2. In glycosphingolipid biosynthesis, sialylates GM1 and GA1 gangliosides to form GD1a and GM1b, respectively. Metabolizes brain c-series ganglioside GT1c forming GQ1c. Synthesizes ganglioside LM1 (IV3Neu5Ac-nLc4Cer), a major structural component of peripheral nerve myelin. The protein is CMP-N-acetylneuraminate-beta-galactosamide-alpha-2,3-sialyltransferase 4 (ST3GAL4) of Homo sapiens (Human).